A 161-amino-acid chain; its full sequence is MPSFDVISEVDKHELTNAVDQANRELDTRFDFKGVEAKFELEDGKVINQSAPSDFQVKQMTDILRARLLARGIDVRCLEFGDVETNLAGARQKVTVKQGIEQKQAKQLVAKLKEAKLKVEAQINGDKLRVTGKKRDDLQDAIAVLKKADFELPLQFDNFRD.

The protein belongs to the YajQ family.

Its function is as follows. Nucleotide-binding protein. This chain is Nucleotide-binding protein xcc-b100_3818, found in Xanthomonas campestris pv. campestris (strain B100).